The following is a 253-amino-acid chain: Regulatory protein VirG (253 aa).

The region spanning 15–129 is the Response regulatory domain; it reads HVLVIDDDVA…EFLARIRVAL (115 aa). 4-aspartylphosphate is present on Asp-64. A DNA-binding region (ompR/PhoB-type) is located at residues 141–241; that stretch reads RRSFSFADWT…ARGAGYFFDA (101 aa).

Post-translationally, phosphorylated by wide host range (WHR) VirA protein.

It is found in the cytoplasm. VirG is required for the positive regulation of at least two vir loci encoded by the Ti plasmid of A.tumefaciens. This Agrobacterium fabrum (strain C58 / ATCC 33970) (Agrobacterium tumefaciens (strain C58)) protein is Regulatory protein VirG (virG).